The sequence spans 325 residues: MEIFDYDNILLLPRKCRVESRSECDASVELGRQRFRIPVVPANMKTVVDESICVWLAQNSYFYVMHRFDLDNVQFVKNMKARGLYASISLGVKKPDYDTVDQLLALGLVPDYITIDIAHGHADSVKNMIGYLKEKMPTVFIIAGNVATPEAVIDLENWGADATKVGIGPGKVCITKLKTGFGTGGWQLSAVKWCARVATKPIIADGGIHEHGDIAKSIRFGATMVMIGSMLAGHEESPGKSVEVDGKLYKEYYGSASDFNKGEYKHVEGKRILEPVKGKLADTLIEMEQDVQSSISYSGGKRLMDIRKVNYVTLGGDNAGEHLLM.

Cysteine 173 functions as the Thioimidate intermediate in the catalytic mechanism. An NADP(+)-binding site is contributed by isoleucine 202–valine 225.

It belongs to the IMPDH/GMPR family. GuaC type 2 subfamily.

It carries out the reaction IMP + NH4(+) + NADP(+) = GMP + NADPH + 2 H(+). Functionally, catalyzes the irreversible NADPH-dependent deamination of GMP to IMP. It functions in the conversion of nucleobase, nucleoside and nucleotide derivatives of G to A nucleotides, and in maintaining the intracellular balance of A and G nucleotides. The polypeptide is GMP reductase (Albidiferax ferrireducens (strain ATCC BAA-621 / DSM 15236 / T118) (Rhodoferax ferrireducens)).